Here is a 523-residue protein sequence, read N- to C-terminus: Beta-glucosidase 31 (523 aa).

The signal sequence occupies residues 1 to 22 (MTPARVVFICCVVLLAAAAAAA). Residues glutamine 49, histidine 149, and 194–195 (NE) contribute to the a beta-D-glucoside site. Glutamate 195 acts as the Proton donor in catalysis. Cysteines 214 and 223 form a disulfide. N-linked (GlcNAc...) asparagine glycosylation occurs at asparagine 227. Residues tyrosine 339 and glutamate 413 each coordinate a beta-D-glucoside. The active-site Nucleophile is glutamate 413. N-linked (GlcNAc...) asparagine glycosylation occurs at asparagine 450. A beta-D-glucoside-binding positions include tryptophan 460, 467 to 468 (EY), and phenylalanine 476.

The protein belongs to the glycosyl hydrolase 1 family.

It catalyses the reaction Hydrolysis of terminal, non-reducing beta-D-glucosyl residues with release of beta-D-glucose.. This is Beta-glucosidase 31 (BGLU31) from Oryza sativa subsp. japonica (Rice).